We begin with the raw amino-acid sequence, 302 residues long: MNSERAQVANPPTQTPVPQQQEIPLAMVHGQPVLQIPQDLYIPPDALEVILDAFEGPLDLLLYLIRRQNLNILDIPVAEITRQYVDYINVMQELRFELAAEYLVMAAILAEIKSRMLLPRPPNIENEEGEDPRAELVRRLQEYERFKQAAEDLDALPRLDRDNSAAHAFVADQTTVRIPPPVNMKELLLALQDVLKRAELFSGHAIRREALSVRQRMGDILAHLEDGKFHPFTTLFTAEEGKLGVLVTFLAILELAKEQLLDIVQEASLGPIYIKSLAIHHTNGPLQLSSDFDNSPSTHAPP.

It belongs to the ScpA family. Component of a cohesin-like complex composed of ScpA, ScpB and the Smc homodimer, in which ScpA and ScpB bind to the head domain of Smc. The presence of the three proteins is required for the association of the complex with DNA.

The protein resides in the cytoplasm. In terms of biological role, participates in chromosomal partition during cell division. May act via the formation of a condensin-like complex containing Smc and ScpB that pull DNA away from mid-cell into both cell halves. The protein is Segregation and condensation protein A of Xylella fastidiosa (strain 9a5c).